A 146-amino-acid chain; its full sequence is Large ribosomal subunit protein uL15 (146 aa).

The disordered stretch occupies residues 1–58 (MNLSELRPAPGARKKPTRKGQGIGSGLGKTAGKGHKGQNARSGGGVRPGFEGGQMPLQ). Gly residues-rich tracts occupy residues 21-31 (QGIGSGLGKTA) and 42-52 (SGGGVRPGFEG).

It belongs to the universal ribosomal protein uL15 family. As to quaternary structure, part of the 50S ribosomal subunit.

In terms of biological role, binds to the 23S rRNA. This is Large ribosomal subunit protein uL15 from Desulforamulus reducens (strain ATCC BAA-1160 / DSM 100696 / MI-1) (Desulfotomaculum reducens).